A 159-amino-acid polypeptide reads, in one-letter code: SsrA-binding protein (159 aa).

This sequence belongs to the SmpB family.

The protein resides in the cytoplasm. Functionally, required for rescue of stalled ribosomes mediated by trans-translation. Binds to transfer-messenger RNA (tmRNA), required for stable association of tmRNA with ribosomes. tmRNA and SmpB together mimic tRNA shape, replacing the anticodon stem-loop with SmpB. tmRNA is encoded by the ssrA gene; the 2 termini fold to resemble tRNA(Ala) and it encodes a 'tag peptide', a short internal open reading frame. During trans-translation Ala-aminoacylated tmRNA acts like a tRNA, entering the A-site of stalled ribosomes, displacing the stalled mRNA. The ribosome then switches to translate the ORF on the tmRNA; the nascent peptide is terminated with the 'tag peptide' encoded by the tmRNA and targeted for degradation. The ribosome is freed to recommence translation, which seems to be the essential function of trans-translation. This Salinispora tropica (strain ATCC BAA-916 / DSM 44818 / JCM 13857 / NBRC 105044 / CNB-440) protein is SsrA-binding protein.